Reading from the N-terminus, the 1492-residue chain is DNA-directed RNA polymerase subunit beta' (1492 aa).

Positions 67, 69, 82, and 85 each coordinate Zn(2+). Mg(2+)-binding residues include aspartate 499, aspartate 501, and aspartate 503. Residues cysteine 867, cysteine 943, cysteine 950, and cysteine 953 each coordinate Zn(2+).

The protein belongs to the RNA polymerase beta' chain family. In terms of assembly, the RNAP catalytic core consists of 2 alpha, 1 beta, 1 beta' and 1 omega subunit. When a sigma factor is associated with the core the holoenzyme is formed, which can initiate transcription. Requires Mg(2+) as cofactor. It depends on Zn(2+) as a cofactor.

The catalysed reaction is RNA(n) + a ribonucleoside 5'-triphosphate = RNA(n+1) + diphosphate. DNA-dependent RNA polymerase catalyzes the transcription of DNA into RNA using the four ribonucleoside triphosphates as substrates. The polypeptide is DNA-directed RNA polymerase subunit beta' (Chlorobium phaeobacteroides (strain DSM 266 / SMG 266 / 2430)).